A 363-amino-acid chain; its full sequence is Peptide chain release factor 1 (363 aa).

Glutamine 237 carries the N5-methylglutamine modification. Basic and acidic residues predominate over residues 284 to 297 (ERAKQQSERSEQRR). Residues 284–306 (ERAKQQSERSEQRRLAVGSGDRS) are disordered.

It belongs to the prokaryotic/mitochondrial release factor family. Post-translationally, methylated by PrmC. Methylation increases the termination efficiency of RF1.

It localises to the cytoplasm. Its function is as follows. Peptide chain release factor 1 directs the termination of translation in response to the peptide chain termination codons UAG and UAA. The polypeptide is Peptide chain release factor 1 (Halorhodospira halophila (strain DSM 244 / SL1) (Ectothiorhodospira halophila (strain DSM 244 / SL1))).